A 49-amino-acid polypeptide reads, in one-letter code: Large ribosomal subunit protein bL33B (49 aa).

Belongs to the bacterial ribosomal protein bL33 family.

This is Large ribosomal subunit protein bL33B from Exiguobacterium sibiricum (strain DSM 17290 / CCUG 55495 / CIP 109462 / JCM 13490 / 255-15).